Here is a 465-residue protein sequence, read N- to C-terminus: Tyrosine 3-monooxygenase (465 aa).

The Fe cation site is built by His-294, His-299, and Glu-339.

This sequence belongs to the biopterin-dependent aromatic amino acid hydroxylase family. It depends on Fe(2+) as a cofactor.

It is found in the cytoplasm. The protein localises to the perinuclear region. The catalysed reaction is (6R)-L-erythro-5,6,7,8-tetrahydrobiopterin + L-tyrosine + O2 = (4aS,6R)-4a-hydroxy-L-erythro-5,6,7,8-tetrahydrobiopterin + L-dopa. The protein operates within catecholamine biosynthesis; dopamine biosynthesis; dopamine from L-tyrosine: step 1/2. The polypeptide is Tyrosine 3-monooxygenase (TH) (Schistosoma mansoni (Blood fluke)).